Consider the following 113-residue polypeptide: Large ribosomal subunit protein bL19 (113 aa).

It belongs to the bacterial ribosomal protein bL19 family.

Its function is as follows. This protein is located at the 30S-50S ribosomal subunit interface and may play a role in the structure and function of the aminoacyl-tRNA binding site. The protein is Large ribosomal subunit protein bL19 of Desulfitobacterium hafniense (strain DSM 10664 / DCB-2).